A 261-amino-acid polypeptide reads, in one-letter code: DNA repair protein RecO (261 aa).

Belongs to the RecO family.

In terms of biological role, involved in DNA repair and RecF pathway recombination. This chain is DNA repair protein RecO, found in Pelodictyon phaeoclathratiforme (strain DSM 5477 / BU-1).